The sequence spans 1940 residues: MSSDQEMAIFGEAAPYLRKSEKERIEAQNRPFDAKTSVFVAEPKESFVKGTVQSREGGKVTVKTEAGATLTVKEDQVFPMNPPKYDKIEDMAMMTHLHEPAVLYNLKERYAAWMIYTYSGLFCVTVNPYKWLPVYNPEVVTAYRGKKRQEAPPHIFSISDNAYQFMLTDRENQSILITGESGAGKTVNTKRVIQYFATIAVTGEKKKEEATSGKMQGTLEDQIISANPLLEAFGNAKTVRNDNSSRFGKFIRIHFGTTGKLASADIETYLLEKSRVTFQLKAERSYHIFYQITSNKKPELIEMLLITTNPYDYPFVSQGEISVASIDDQEELIATDSAIDILGFTNEEKVSIYKLTGAVMHYGNLKFKQKQREEQAEPDGTEVADKAAYLQSLNSADLLKALCYPRVKVGNEFVTKGQTVEQVTNAVGALAKAVYEKMFLWMVTRINQQLDTKQPRQYFIGVLDIAGFEIFDFNSLEQLCINFTNEKLQQFFNHHMFVLEQEEYKKEGIEWTFIDFGMDLAACIELIEKPMGIFSILEEECMFPKATDTSFKNKLYEQHLGKSANFQKPKVVKGKAEAHFSLIHYAGVVDYNITGWLDKNKDPLNETVVGLYQKSSMKTLAYLFSGAQTAEAEASGGAKKGGKKKGSSFQTVSALFRENLNKLMTNLRSTHPHFVRCIIPNETKTPGAMEHELVLHQLRCNGVLEGIRICRKGFPSRILYADFKQRYKVLNASAIPEGQFIDSKKASEKLLASIDIDHTQYKFGHTKVFFKAGLLGLLEEMRDDKLAQLITRTQARCRGFLARVEYQKMVERRESIFCIQYNIRAFMNVKHWPWMKLFFKIKPLLKSAETEKEMATMKEEFQKTKDELAKSEAKRKELEEKMVTLLKEKNDLQLQVQAEAEGLADAEERCDQLIKTKIQLEAKIKEVTERAEDEEEINAELTAKKRKLEDECSELKKDIDDLELTLAKVEKEKHATENKVKNLTEEMAGLDETIAKLTKEKKALQEAHQQTLDDLQAEEDKVNTLTKAKIKLEQQVDDLEGSLEQEKKLRMDLERAKRKLEGDLKLAQESIMDIENEKQQLDEKLKKKEFEMSNLQSKIEDEQALGIQLQKKIKELQARIEELEEEIEAERASRAKAEKQRSDLSRELEEISERLEEAGGATSAQIEMNKKREAEFQKMRRDLEEATLQHEATAATLRKKHADSVAELGEQIDNLQRVKQKLEKEKSEMKMEIDDLASNVETVSKAKGNLEKMCRTLEDQVSELKSKEEEQQRLINDLTTQRGRLQTESGEFSRQLDEKEALVSQLSRGKLAFTQQIEELKRQLEEEIKAKNALAHALQSSRHDCDLLREQYEEEQESKAELQRALSKANSEVAQWRTKYETDAIQRTEELEEAKKKLAQRLQAAEEHVEAVNAKCASLEKTKQRLQNEVEDLMLDVERTNAACAALDKKQRNFDKILAEWKQKYEETHAELEASQKEARSLGTELFKMKNAYEESLDQLETLKRENKNLQQEISDLTEQIAEGGKRIHELEKIKKQVEQEKSEIQAALEEAEASLEHEEGKILRIQLELNQVKSEIDRKIAEKDEEIDQLKRNHIRVVESMQTMLDAEIRSRNDAIRLKKKMEGDLNEMEIQLNHANRMAAEALRNYRNTQGILKDTQIHLDDALRGQEDLKEQLAMVERRANLLQAEIEELRATLEQTERSRKIAEQELLDASERVQLLHTQNTSLINTKKKLETDISQIQGEMEDIIQEARNAEEKAKKAITDAAMMAEELKKEQDTSAHLERMKKNMEQTVKDLQHRLDEAEQLALKGGKKQIQKLEARVRELEGEVESEQKRNAEAVKGLRKHERRVKELTYQTEEDRKNILRLQDLVDKLQAKVKSYKRQAEEAEEQSNTNLSKFRKLQHELEEAEERADIAESQVNKLRVKSREVHTKVISEE.

One can recognise a Myosin N-terminal SH3-like domain in the interval 33–82 (DAKTSVFVAEPKESFVKGTVQSREGGKVTVKTEAGATLTVKEDQVFPMNP). Phosphothreonine occurs at positions 64 and 69. The Myosin motor domain occupies 86–783 (DKIEDMAMMT…LLGLLEEMRD (698 aa)). Lysine 130 carries the post-translational modification N6,N6,N6-trimethyllysine. ATP is bound at residue 179–186 (GESGAGKT). Tyrosine 389 carries the post-translational modification Phosphotyrosine. Serine 392 carries the post-translational modification Phosphoserine. Threonine 419 is modified (phosphothreonine). Serine 625 bears the Phosphoserine mark. Positions 660–682 (LNKLMTNLRSTHPHFVRCIIPNE) are actin-binding. Pros-methylhistidine is present on histidine 758. Positions 762–776 (KFGHTKVFFKAGLLG) are actin-binding. Residues 786–815 (LAQLITRTQARCRGFLARVEYQKMVERRES) form the IQ domain. Positions 844–1940 (LLKSAETEKE…EVHTKVISEE (1097 aa)) form a coiled coil. Serine 1093, serine 1097, serine 1163, and serine 1238 each carry phosphoserine. The segment at 1154-1173 (RLEEAGGATSAQIEMNKKRE) is disordered. Phosphothreonine is present on threonine 1242. The residue at position 1244 (serine 1244) is a Phosphoserine. Threonine 1256 is subject to Phosphothreonine. A Phosphoserine modification is found at serine 1262. Threonine 1287 is subject to Phosphothreonine. 4 positions are modified to phosphoserine: serine 1289, serine 1293, serine 1304, and serine 1307. Tyrosine 1465 is modified (phosphotyrosine). Threonine 1468 is modified (phosphothreonine). A Phosphoserine modification is found at serine 1475. A Phosphotyrosine modification is found at tyrosine 1493. Serine 1496 carries the post-translational modification Phosphoserine. Residue threonine 1502 is modified to Phosphothreonine. The residue at position 1515 (serine 1515) is a Phosphoserine. Threonine 1518 carries the phosphothreonine modification. Serine 1543, serine 1555, serine 1575, serine 1601, serine 1715, and serine 1727 each carry phosphoserine. Phosphothreonine is present on residues threonine 1731 and threonine 1737. Serine 1740 is modified (phosphoserine). The tract at residues 1884-1920 (KRQAEEAEEQSNTNLSKFRKLQHELEEAEERADIAES) is disordered.

It belongs to the TRAFAC class myosin-kinesin ATPase superfamily. Myosin family. In terms of assembly, muscle myosin is a hexameric protein that consists of 2 heavy chain subunits (MHC), 2 alkali light chain subunits (MLC) and 2 regulatory light chain subunits (MLC-2). Interacts with GCSAM.

Its subcellular location is the cytoplasm. It is found in the myofibril. Functionally, myosins are actin-based motor molecules with ATPase activity essential for muscle contraction. The protein is Myosin-2 (MYH2) of Canis lupus familiaris (Dog).